A 188-amino-acid chain; its full sequence is dCTP deaminase (188 aa).

DCTP is bound by residues 111 to 116 (KSTYAR), 135 to 137 (TLE), Gln156, Tyr170, Lys179, and Gln180. The Proton donor/acceptor role is filled by Glu137.

Belongs to the dCTP deaminase family. Homotrimer.

The enzyme catalyses dCTP + H2O + H(+) = dUTP + NH4(+). It participates in pyrimidine metabolism; dUMP biosynthesis; dUMP from dCTP (dUTP route): step 1/2. Functionally, catalyzes the deamination of dCTP to dUTP. In Rickettsia felis (strain ATCC VR-1525 / URRWXCal2) (Rickettsia azadi), this protein is dCTP deaminase.